Reading from the N-terminus, the 364-residue chain is Protein spindle-F (364 aa).

Residues 1–26 form a disordered region; the sequence is MEASAAKITPMASSMSASGSTNSPSS. Positions 9-26 are enriched in low complexity; that stretch reads TPMASSMSASGSTNSPSS. Residues 32 to 114 are a coiled coil; it reads ALQVALQTIK…GMVSNENRRL (83 aa). Ser-53 is modified (phosphoserine). The segment at 56 to 75 is disordered; sequence EENQQLREASSRSEGAPRAN. Phosphoserine occurs at positions 85, 172, and 202. Positions 210–243 form a coiled coil; that stretch reads AKRCLDGLQELRREAMKQQQELRSVMTLLENRIA. Residues Ser-264 and Ser-270 each carry the phosphoserine modification. The UBZ1-type zinc-finger motif lies at 310–336; that stretch reads EKTCPMCGKQYSSQVSFNAFREHVEMH. Positions 313 and 316 each coordinate Zn(2+). Position 325 is a phosphoserine (Ser-325). Residues His-332 and His-336 each contribute to the Zn(2+) site. Ser-349 is modified (phosphoserine).

As to quaternary structure, forms homooligomers. Interacts with the dynein light chain ctp. Interacts (via C-terminus) with IKKepsilon; this leads to phosphorylation of spn-F. Forms ternary complexes with ctp and IKKepsilon; this is required for spn-F redistribution from puncta in larval neurons and for dendrite pruning. Interacts with ctp and IKKepsilon through distinct regions. Interacts (via C-terminus) with jvl. Post-translationally, phosphorylated by IKKepsilon. Phosphorylation is required for spn-F neuronal distribution and dendrite pruning and reduces spn-F homooligomerization. It does not lead to spn-F degradation. In pupal bristles, localizes to the bristle tip throughout the elongation period (at protein level).

It localises to the cytoplasm. Its subcellular location is the cytoskeleton. It is found in the cell projection. The protein resides in the axon. The protein localises to the dendrite. It localises to the perikaryon. In terms of biological role, plays a role in oocyte axis determination and microtubule organization during oogenesis. Also required for polarized organization of the bristle. Required, with jvl, for activation of the kinase IKKepsilon in the germ line. Also required for localization of IKKepsilon to the distal tip of elongating bristles by acting as an adapter linking IKKepsilon and cytoplasmic dynein. Involved in dendrite pruning in larval sensory neurons during metamorphosis. This Drosophila melanogaster (Fruit fly) protein is Protein spindle-F.